A 277-amino-acid polypeptide reads, in one-letter code: MELIEKHASFGGWQNVYRHYSQSLKCEMNVGVYLPPKAANEKLPVLYWLSGLTCNEQNFITKSGMQRYAAEHNIIVVAPDTSPRGSHVADADRYDLGQGAGFYLNATQAPWNEHYKMYDYIRNELPDLVMQHFPATTRKSISGHSMGGLGALVLALRNPDEYVSVSAFSPIVSPSQAPWGQQAFAAYLGENKDAWLDYDPVSLISQGQRVAEIMVDQGLSDDFYAEQLRTPNLEKICQEMNIKTLIRYHEGYDHSYYFVSSFIGEHIAYHANKLNMR.

Active-site charge relay system residues include S145, D221, and H254.

The protein belongs to the esterase D family.

It catalyses the reaction S-formylglutathione + H2O = formate + glutathione + H(+). Serine hydrolase involved in the detoxification of formaldehyde. Hydrolyzes S-formylglutathione to glutathione and formate. This Escherichia coli O9:H4 (strain HS) protein is S-formylglutathione hydrolase FrmB (frmB).